A 338-amino-acid chain; its full sequence is Phosphoribosylformylglycinamidine cyclo-ligase (338 aa).

This sequence belongs to the AIR synthase family.

It localises to the cytoplasm. The catalysed reaction is 2-formamido-N(1)-(5-O-phospho-beta-D-ribosyl)acetamidine + ATP = 5-amino-1-(5-phospho-beta-D-ribosyl)imidazole + ADP + phosphate + H(+). The protein operates within purine metabolism; IMP biosynthesis via de novo pathway; 5-amino-1-(5-phospho-D-ribosyl)imidazole from N(2)-formyl-N(1)-(5-phospho-D-ribosyl)glycinamide: step 2/2. In Thermoplasma acidophilum (strain ATCC 25905 / DSM 1728 / JCM 9062 / NBRC 15155 / AMRC-C165), this protein is Phosphoribosylformylglycinamidine cyclo-ligase.